Here is a 175-residue protein sequence, read N- to C-terminus: Development-specific protein S homolog (175 aa).

Beta/gamma crystallin 'Greek key' domains follow at residues 2-46 (ANIT…KVPP) and 48-86 (VKAILYKNDDFTGDQIEVVANAEELGPLNNNVSSIKVMS). A connecting peptide region spans residues 87 to 90 (VPVQ). Beta/gamma crystallin 'Greek key' domains lie at 91-135 (PRAR…KPEG) and 136-175 (LKVVLFKNDNFSAGDTLSVTSNAPSLGAMNNNTSSIRITP).

The protein belongs to the beta/gamma-crystallin family.

The protein resides in the spore. Its subcellular location is the perispore. The sequence is that of Development-specific protein S homolog (ops) from Myxococcus xanthus.